We begin with the raw amino-acid sequence, 378 residues long: MKMFQPRRGFSCHLAWFMLQTTLYASWLLGLFPFTFDSRRKQLKRSRWLLLYGFVLHSLAMCLAMSSHLASKQRRKYNAFERNPLLEKIYMQFQVTTFFTISVLLLMNVWKSNTVRKIANELLTLEGQVKDLLTLKNCPNFNCFVIKKHVAAIGQFVISIYFCLCQENSYPKILKILCCLPSVGLQLIIMHFHTEIILVYRYVWLVNETLEDSHHLSSSRIHALASLYDRLLKLSELVVACNDLQLILMLIIYLIGNTVQIFFLIVLGVSMNKRYIYLVASPQLIINFWDFWLNIVVCDLAGKCGDQTSKVLKLFTDLEHDDEELERSLNEFAWLCTHRKFRFQLCGLFSINHNMGFQMIITSFLYLVYLLQFDFMNL.

Residues 1-13 (MKMFQPRRGFSCH) lie on the Cytoplasmic side of the membrane. Residues 14–34 (LAWFMLQTTLYASWLLGLFPF) traverse the membrane as a helical segment. At 35–48 (TFDSRRKQLKRSRW) the chain is on the extracellular side. The chain crosses the membrane as a helical span at residues 49–69 (LLLYGFVLHSLAMCLAMSSHL). Over 70–88 (ASKQRRKYNAFERNPLLEK) the chain is Cytoplasmic. Residues 89 to 109 (IYMQFQVTTFFTISVLLLMNV) traverse the membrane as a helical segment. Topologically, residues 110–143 (WKSNTVRKIANELLTLEGQVKDLLTLKNCPNFNC) are extracellular. A helical membrane pass occupies residues 144–164 (FVIKKHVAAIGQFVISIYFCL). At 165 to 178 (CQENSYPKILKILC) the chain is on the cytoplasmic side. Residues 179–199 (CLPSVGLQLIIMHFHTEIILV) form a helical membrane-spanning segment. Topologically, residues 200-245 (YRYVWLVNETLEDSHHLSSSRIHALASLYDRLLKLSELVVACNDLQ) are extracellular. Asn207 is a glycosylation site (N-linked (GlcNAc...) asparagine). A helical transmembrane segment spans residues 246-266 (LILMLIIYLIGNTVQIFFLIV). Topologically, residues 267–354 (LGVSMNKRYI…LCGLFSINHN (88 aa)) are cytoplasmic. Residues 355 to 375 (MGFQMIITSFLYLVYLLQFDF) form a helical membrane-spanning segment. Topologically, residues 376–378 (MNL) are extracellular.

Belongs to the insect chemoreceptor superfamily. Gustatory receptor (GR) family. Gr22e subfamily. In terms of tissue distribution, taste bristles in the foreleg and labial palps.

The protein resides in the cell membrane. Functionally, probable gustatory receptor which mediates acceptance or avoidance behavior, depending on its substrates. This chain is Putative gustatory receptor 22f (Gr22f), found in Drosophila melanogaster (Fruit fly).